The chain runs to 196 residues: MSFAEKITGLLARPNQDPAGGPEAPWYLKYGSRVLGIVAAFFAILFGLWNVLSIIGLSVSCLVAGIIQMLAGFVVMALEAPCCFVCIEQVGSVADKVDAKPMYFRAGLYCAMAVPPIFMCFGLASLFGSGLIFATGAVYGMMALGKKASATDMRAAAQQSGYGGNATTSTTNDRAGIVNNAQPFSFTGAVGTDSNV.

3 consecutive transmembrane segments (helical) span residues 35–55 (LGIV…LSII), 70–92 (LAGF…QVGS), and 113–133 (AVPP…GLIF).

The protein belongs to the calcium channel flower family. In terms of assembly, homomultimer. Associates with the dally/ magu complex.

It localises to the cell membrane. The protein localises to the cytoplasmic vesicle. Its subcellular location is the secretory vesicle. It is found in the synaptic vesicle membrane. The protein resides in the presynaptic cell membrane. It localises to the endosome. Its activity is regulated as follows. Channel activity is inhibited by La(3+), which reduces Ca(2+) influx and thus inhibits it's function in promoting activity-dependent bulk endocytosis (ADBE) in response to high stimuli. Functionally, transmembrane protein which mediates synaptic endocytosis, fitness-based cell culling, neuronal culling, morphogen gradient scaling, and calcium transport. Regulates synaptic endocytosis and hence couples exo- with endocytosis. Controls two major modes of synaptic vesicle (SV) endocytosis in the synaptic boutons of neuromuscular junctions (NMJs); Ca(2+) channel-independent Clathrin-mediated endocytosis (CME) in response to mild stimulation, and Ca(2+) channel-dependent activity-dependent bulk endocytosis (ADBE) in response to strong stimulation. Functions in ADBE and subsequent SV reformation from bulk endosomes by initiating Ca(2+) channel-dependent phosphatidylinositol 4,5-bisphosphate (PtdIns(4,5)P2) compartmentalization in synaptic boutons. There it acts at the periactive zone to provide the low Ca(2+) levels required to initiate Calcineurin activation and upregulate PtdIns(4,5)P2. Conversely PtdIns(4,5)P2 enhances fwe Ca(2+) channel-activity, establishing a positive feedback loop that induces PtdIns(4,5)P2 microdomain at the periactive zone. These microdomains trigger bulk membrane invagination (i.e. ADBE) by triggering actin polymerization while also promoting localization of fwe to bulk endosomes, thereby removing the ADBE trigger to reduce endocytosis and prevent excess membrane uptake. PtdIns(4,5)P2 then promotes SV reformation from the bulk endosomes, to coordinate ADBE and subsequent SV reformation. Different combinations of the flower isoforms at the cell membrane are also required for the identification and elimination of suboptimal or supernumerary cells during development, regeneration, and adulthood. Required for the recognition and elimination of unfit cells in the developing wing during cell competition. In the developing pupal retina, mediates the elimination of unwanted postmitotic neurons, including supernumerary photoreceptor neurons that form at the periphery of the retina and are contained within incomplete ommatidia units. Also required for efficient elimination and replacement of old neurons by newly generated neurons during regeneration in the adult brain following mechanical injury. Downstream of the flower fitness fingerprints, cells identified as unwanted or unfit are eliminated via apoptosis through the expression of ahuizotl (azot). However, the cells marked for elimination by the flower isoforms only undergo apoptosis if additional thresholds are met; (1) their neighboring fit/healthy cells express different levels of the fwe isoforms, and (2) the levels of the protective signal SPARC expressed by the loser or unwanted cells are unable to inhibit caspase activation. These additional thresholds for flower-mediated apoptosis, allows useful cells to recover from transient and limited stress before they are unnecessarily eliminated. Functions with dally and magu in a mechanism of scaling, which utilises apoptosis to ensure that the dpp morphogen gradient, which mediates organ growth, remains proportional to the size of the growing wing. In this mechanism, fwe represses dally- and Magu-dependent activity in expanding the gradient, and dally/Magu inhibits fwe-dependent apoptosis to keep cell death rate low. When the levels of these different proteins are optimally regulated the gradient correctly scales with organ growth but when this fails, fwe-mediated apoptosis is activated to trim the developing tissue to match the correct size of the gradient. The polypeptide is Calcium channel flower (Drosophila grimshawi (Hawaiian fruit fly)).